The chain runs to 342 residues: Guanine nucleotide-binding protein alpha-9 subunit (342 aa).

Gly-2 is lipidated: N-myristoyl glycine. Cys-3 carries S-palmitoyl cysteine lipidation. A G-alpha domain is found at 28 to 342; that stretch reads REIKLLLLGS…IIQSILKLHY (315 aa). The G1 motif stretch occupies residues 31–44; it reads KLLLLGSGDSGKST. GTP contacts are provided by residues 36–43, 167–173, 192–196, 261–264, and Ala-316; these read GSGDSGKS, LRCRQRT, DVGGQ, and NKND. Ser-43 and Thr-173 together coordinate Mg(2+). The segment at 165-173 is G2 motif; it reads DVLRCRQRT. Residues 188-197 are G3 motif; sequence FRLIDVGGQK. The segment at 257–264 is G4 motif; sequence VLFLNKND. Residues 314 to 319 are G5 motif; it reads TTATDT.

The protein belongs to the G-alpha family. In terms of assembly, g proteins are composed of 3 units; alpha, beta and gamma. The alpha chain contains the guanine nucleotide binding site.

In terms of biological role, guanine nucleotide-binding proteins (G proteins) are involved as modulators or transducers in various transmembrane signaling systems. G alpha-9 antagonizes broad chemotactic response. It functions rapidly following receptor stimulation to negatively regulate PI3K/PTEN, adenylyl cyclase, and guanylyl cyclase pathways. The polypeptide is Guanine nucleotide-binding protein alpha-9 subunit (gpaI) (Dictyostelium discoideum (Social amoeba)).